Consider the following 138-residue polypeptide: Envelope glycoprotein N (138 aa).

A signal peptide spans 1 to 21 (MEWNTLVLGLLVLSVVAESSG). Over 22-101 (NNSSTSTSAT…SHMYELSLSS (80 aa)) the chain is Virion surface. A helical membrane pass occupies residues 102–122 (FAAWWTMLNALILMGAFCIVL). The Intravirion segment spans residues 123-138 (RHCCFQNFTATTTKGY).

This sequence belongs to the herpesviridae glycoprotein N family. In terms of assembly, interacts (via N-terminus) with gM (via N-terminus). The gM-gN heterodimer forms the gCII complex. Post-translationally, O-glycosylated.

The protein localises to the virion membrane. Its subcellular location is the host membrane. The protein resides in the host Golgi apparatus. It is found in the host trans-Golgi network. Functionally, envelope glycoprotein necessary for proper maturation of gM and modulation of its membrane fusion activity. Also plays a critical role in virion morphogenesis. This chain is Envelope glycoprotein N, found in Human cytomegalovirus (strain AD169) (HHV-5).